A 129-amino-acid chain; its full sequence is Small ribosomal subunit protein eS8 (129 aa).

The interval 1–29 (MSVWQGRSRRKPTGGLYRPARKKRKYEMG) is disordered.

Belongs to the eukaryotic ribosomal protein eS8 family. Part of the 30S ribosomal subunit.

The chain is Small ribosomal subunit protein eS8 (rps8e) from Methanocaldococcus jannaschii (strain ATCC 43067 / DSM 2661 / JAL-1 / JCM 10045 / NBRC 100440) (Methanococcus jannaschii).